The following is a 242-amino-acid chain: Small ribosomal subunit protein uS2 (242 aa).

It belongs to the universal ribosomal protein uS2 family.

This Shewanella halifaxensis (strain HAW-EB4) protein is Small ribosomal subunit protein uS2.